The chain runs to 493 residues: 3-octaprenyl-4-hydroxybenzoate carboxy-lyase (493 aa).

Residue N172 participates in Mn(2+) binding. Prenylated FMN is bound by residues 175 to 177 (IYR), 189 to 191 (RWL), and 194 to 195 (RG). Residue E238 participates in Mn(2+) binding. The active-site Proton donor is D287.

The protein belongs to the UbiD family. In terms of assembly, homohexamer. The cofactor is prenylated FMN. Mn(2+) is required as a cofactor.

The protein localises to the cell membrane. The enzyme catalyses a 4-hydroxy-3-(all-trans-polyprenyl)benzoate + H(+) = a 2-(all-trans-polyprenyl)phenol + CO2. It participates in cofactor biosynthesis; ubiquinone biosynthesis. In terms of biological role, catalyzes the decarboxylation of 3-octaprenyl-4-hydroxy benzoate to 2-octaprenylphenol, an intermediate step in ubiquinone biosynthesis. The chain is 3-octaprenyl-4-hydroxybenzoate carboxy-lyase from Shewanella loihica (strain ATCC BAA-1088 / PV-4).